Reading from the N-terminus, the 421-residue chain is 4-hydroxy-3-methylbut-2-en-1-yl diphosphate synthase (flavodoxin) (421 aa).

Positions 298, 301, 344, and 351 each coordinate [4Fe-4S] cluster.

This sequence belongs to the IspG family. [4Fe-4S] cluster serves as cofactor.

It catalyses the reaction (2E)-4-hydroxy-3-methylbut-2-enyl diphosphate + oxidized [flavodoxin] + H2O + 2 H(+) = 2-C-methyl-D-erythritol 2,4-cyclic diphosphate + reduced [flavodoxin]. It participates in isoprenoid biosynthesis; isopentenyl diphosphate biosynthesis via DXP pathway; isopentenyl diphosphate from 1-deoxy-D-xylulose 5-phosphate: step 5/6. In terms of biological role, converts 2C-methyl-D-erythritol 2,4-cyclodiphosphate (ME-2,4cPP) into 1-hydroxy-2-methyl-2-(E)-butenyl 4-diphosphate. In Neisseria meningitidis serogroup B (strain ATCC BAA-335 / MC58), this protein is 4-hydroxy-3-methylbut-2-en-1-yl diphosphate synthase (flavodoxin).